A 423-amino-acid chain; its full sequence is MDKLLLRGNGPLRGELRISGAKNAALPCLAATLLAREPVRLCNIPHLRDITTTLELLSTLGARVLVDGQLGIEVDPRPVHSVVAPYELVKTMRASILVLGPLLARHGSAEVSLPGGCAIGSRPVSVHLSGLQALGAEITVEDGFVKAQAARLRGTRIVMEMVSVTGTENLLMAATLAEGRTILENAAREPEIVDLARCLSAMGARISGAGTSVIEIEGVAELHGAEHSVVPDRIETGTYLVAAAMTGGDICLKRTDAGLLESVLLKLKEAGAEVTTGADTIRIRMKRRPRAVDVRTAPFPAFPTDMQAQFMAMNCIAEGSSVVTETIFENRFMHVSELQRLGADINADGKTAVVRGVQRLRGAPVMATDLRASASLVLAGLVAEGETLIDRIYHLDRGYEVIEEKLSALGADIRRISNTRSVA.

Residue 22-23 (KN) participates in phosphoenolpyruvate binding. Arg93 provides a ligand contact to UDP-N-acetyl-alpha-D-glucosamine. Residue Cys117 is the Proton donor of the active site. Cys117 carries the post-translational modification 2-(S-cysteinyl)pyruvic acid O-phosphothioketal. Residues Asp305 and Ile327 each contribute to the UDP-N-acetyl-alpha-D-glucosamine site.

This sequence belongs to the EPSP synthase family. MurA subfamily.

The protein resides in the cytoplasm. The catalysed reaction is phosphoenolpyruvate + UDP-N-acetyl-alpha-D-glucosamine = UDP-N-acetyl-3-O-(1-carboxyvinyl)-alpha-D-glucosamine + phosphate. The protein operates within cell wall biogenesis; peptidoglycan biosynthesis. Its function is as follows. Cell wall formation. Adds enolpyruvyl to UDP-N-acetylglucosamine. The polypeptide is UDP-N-acetylglucosamine 1-carboxyvinyltransferase (Acidithiobacillus ferrooxidans (strain ATCC 23270 / DSM 14882 / CIP 104768 / NCIMB 8455) (Ferrobacillus ferrooxidans (strain ATCC 23270))).